Here is a 588-residue protein sequence, read N- to C-terminus: Aspartate--tRNA ligase (588 aa).

L-aspartate is bound at residue glutamate 174. The aspartate stretch occupies residues 198 to 201 (QLFK). Arginine 220 provides a ligand contact to L-aspartate. ATP is bound by residues 220-222 (RDE) and glutamine 229. Histidine 448 provides a ligand contact to L-aspartate. Glutamate 482 provides a ligand contact to ATP. Arginine 489 serves as a coordination point for L-aspartate. 534–537 (GIDR) lines the ATP pocket.

Belongs to the class-II aminoacyl-tRNA synthetase family. Type 1 subfamily. Homodimer.

The protein resides in the cytoplasm. The enzyme catalyses tRNA(Asp) + L-aspartate + ATP = L-aspartyl-tRNA(Asp) + AMP + diphosphate. Its function is as follows. Catalyzes the attachment of L-aspartate to tRNA(Asp) in a two-step reaction: L-aspartate is first activated by ATP to form Asp-AMP and then transferred to the acceptor end of tRNA(Asp). This is Aspartate--tRNA ligase from Xanthomonas campestris pv. campestris (strain B100).